Here is a 334-residue protein sequence, read N- to C-terminus: Biotin synthase (334 aa).

The region spanning Thr-41–Arg-260 is the Radical SAM core domain. Positions 56, 60, and 63 each coordinate [4Fe-4S] cluster. 4 residues coordinate [2Fe-2S] cluster: Cys-100, Cys-131, Cys-191, and Arg-264.

The protein belongs to the radical SAM superfamily. Biotin synthase family. Homodimer. It depends on [4Fe-4S] cluster as a cofactor. Requires [2Fe-2S] cluster as cofactor.

The enzyme catalyses (4R,5S)-dethiobiotin + (sulfur carrier)-SH + 2 reduced [2Fe-2S]-[ferredoxin] + 2 S-adenosyl-L-methionine = (sulfur carrier)-H + biotin + 2 5'-deoxyadenosine + 2 L-methionine + 2 oxidized [2Fe-2S]-[ferredoxin]. The protein operates within cofactor biosynthesis; biotin biosynthesis; biotin from 7,8-diaminononanoate: step 2/2. Its function is as follows. Catalyzes the conversion of dethiobiotin (DTB) to biotin by the insertion of a sulfur atom into dethiobiotin via a radical-based mechanism. The sequence is that of Biotin synthase from Bradyrhizobium sp. (strain ORS 278).